The following is a 509-amino-acid chain: MENLSERFNALQDLLMNIYEAAEQTLEAQIKHWQTLRQEAVLLYFARQRGVTRLGYQPVPVKAVSEAKAKEAIAMVLQLQSLQTSEYASETWTLVDTSIETFRSAPDGHFKKGPVPVEVIYDNDADNANLYTMWTYVYYMEDDVWHKARSGVNETGIYYLQGTFKYYYVLFADDARKYSQTGQWEVKVNKETVFAPVTSSTPPGSPGGQADTNASSKTSTTTTATVDSTTKQLTTSEQPQQTETKGRKYGRRPSSRTRRPQAKQRRSRSRHRSSRSRSRSQSRSHTPTTRSATTRSRSPSLAKTGVQRVSTRSRSRSTSRRGGRRRRSRSPSTSSSTTTTNKRSRVRAETTGSRGARGGRGARGGSGGGRRRGRSSSSTSPAHKRSREHSVRSRGVSPDQVGKSLRSVSSKHTGRLGRLLEEALDPPVILVRGEANTLKCFRNRAKIKYMGLYRSFSTTWSWVAGDGTERLGRPRMLISFSSYNQRRDFDDVVRYPKGVEKSYGNLDSL.

A transactivation domain region spans residues 1 to 200 (MENLSERFNA…ETVFAPVTSS (200 aa)). The segment at 197-413 (VTSSTPPGSP…SLRSVSSKHT (217 aa)) is disordered. Low complexity predominate over residues 211-231 (DTNASSKTSTTTTATVDSTTK). Residues 232 to 243 (QLTTSEQPQQTE) show a composition bias toward polar residues. Positions 247–282 (RKYGRRPSSRTRRPQAKQRRSRSRHRSSRSRSRSQS) are enriched in basic residues. Residues 283–310 (RSHTPTTRSATTRSRSPSLAKTGVQRVS) show a composition bias toward low complexity. Residues 311-329 (TRSRSRSTSRRGGRRRRSR) show a composition bias toward basic residues. Low complexity predominate over residues 330-341 (SPSTSSSTTTTN). Over residues 355–368 (GARGGRGARGGSGG) the composition is skewed to gly residues. Positions 425–509 (DPPVILVRGE…EKSYGNLDSL (85 aa)) are DNA-binding domain.

This sequence belongs to the papillomaviridae E2 protein family. Binds DNA as homodimer. Interacts with protein E1; this interaction greatly increases E1 DNA-binding activity. Interacts with protein L1; this interaction enhances E2-dependent replication and transcription activation. Interacts with protein L2; this interaction inhibits E2 transcriptional activity but not DNA replication function E2. Interacts with protein E7; this interaction inhibits E7 oncogenic activity. Interacts with host TAF1; this interaction modulates E2-dependent transcriptional regulation. Interacts with host BRD4; this interaction mediates E2 transcriptional activation function. Additionally, the interaction with host BRD4 on mitotic chromosomes mediates tethering of the viral genome. Interacts with host TOPBP1; this interaction is required for optimal viral DNA replication. Post-translationally, phosphorylated.

It localises to the host nucleus. Its function is as follows. Plays a role in the initiation of viral DNA replication. A dimer of E2 interacts with a dimer of E1 in order to improve specificity of E1 DNA binding activity. Once the complex recognizes and binds DNA at specific sites, the E2 dimer is removed from DNA. E2 also regulates viral transcription through binding to the E2RE response element (5'-ACCNNNNNNGGT-3') present in multiple copies in the regulatory regions of the viral genome. Activates or represses transcription depending on E2RE's position with regards to proximal promoter elements including the TATA-box. Repression occurs by sterically hindering the assembly of the transcription initiation complex. This chain is Regulatory protein E2, found in Human papillomavirus 36.